A 96-amino-acid polypeptide reads, in one-letter code: Progonadoliberin-1 (96 aa).

Positions 1 to 26 (MHRKMAVKTLSVWLLLVGTLVPQHCC) are cleaved as a signal peptide. Gln-27 carries the pyrrolidone carboxylic acid modification. Gly-36 is subject to Glycine amide.

The protein belongs to the GnRH family. Preoptic area of the brain.

It is found in the secreted. Stimulates the secretion of gonadotropins. The chain is Progonadoliberin-1 (gnrh1) from Verasper moseri (Barfin flounder).